The chain runs to 95 residues: Large ribosomal subunit protein bL25 (95 aa).

The protein belongs to the bacterial ribosomal protein bL25 family. Part of the 50S ribosomal subunit; part of the 5S rRNA/L5/L18/L25 subcomplex. Contacts the 5S rRNA. Binds to the 5S rRNA independently of L5 and L18.

In terms of biological role, this is one of the proteins that binds to the 5S RNA in the ribosome where it forms part of the central protuberance. The protein is Large ribosomal subunit protein bL25 of Mannheimia succiniciproducens (strain KCTC 0769BP / MBEL55E).